Reading from the N-terminus, the 359-residue chain is tRNA N6-adenosine threonylcarbamoyltransferase (359 aa).

2 residues coordinate Fe cation: H115 and H119. Substrate-binding positions include 137–141, D170, G183, and N283; that span reads LVSGG. D311 serves as a coordination point for Fe cation. Residues 328 to 359 form a disordered region; that stretch reads APDSLDIAPRSRWPLDEKSAPVFGTGRRGAKA.

Belongs to the KAE1 / TsaD family. The cofactor is Fe(2+).

The protein localises to the cytoplasm. It carries out the reaction L-threonylcarbamoyladenylate + adenosine(37) in tRNA = N(6)-L-threonylcarbamoyladenosine(37) in tRNA + AMP + H(+). Functionally, required for the formation of a threonylcarbamoyl group on adenosine at position 37 (t(6)A37) in tRNAs that read codons beginning with adenine. Is involved in the transfer of the threonylcarbamoyl moiety of threonylcarbamoyl-AMP (TC-AMP) to the N6 group of A37, together with TsaE and TsaB. TsaD likely plays a direct catalytic role in this reaction. The chain is tRNA N6-adenosine threonylcarbamoyltransferase from Brucella melitensis biotype 2 (strain ATCC 23457).